Here is a 432-residue protein sequence, read N- to C-terminus: Trigger factor (432 aa).

Residues 163–248 (GDVVVLDFAA…VHAVKERRLP (86 aa)) form the PPIase FKBP-type domain.

The protein belongs to the FKBP-type PPIase family. Tig subfamily.

It localises to the cytoplasm. The catalysed reaction is [protein]-peptidylproline (omega=180) = [protein]-peptidylproline (omega=0). Involved in protein export. Acts as a chaperone by maintaining the newly synthesized protein in an open conformation. Functions as a peptidyl-prolyl cis-trans isomerase. The chain is Trigger factor from Nitratidesulfovibrio vulgaris (strain DSM 19637 / Miyazaki F) (Desulfovibrio vulgaris).